Here is a 399-residue protein sequence, read N- to C-terminus: Putative 3'-5' exonuclease R431 (399 aa).

One can recognise a 3'-5' exonuclease domain in the interval F118–N297. The 65-residue stretch at E335–C399 folds into the R3H domain.

This chain is Putative 3'-5' exonuclease R431, found in Acanthamoeba polyphaga (Amoeba).